The primary structure comprises 660 residues: UvrABC system protein B (660 aa).

In terms of domain architecture, Helicase ATP-binding spans 24–177 (KGFKEGNQFE…DDLARALIDL (154 aa)). 37–44 (GVTGSGKT) lines the ATP pocket. The Beta-hairpin motif lies at 90–113 (YYDYYQPEAYVPQSDTYIAKDSSV). In terms of domain architecture, Helicase C-terminal spans 428–594 (QIDDLVSEVN…TIQKSVRDLI (167 aa)). The region spanning 620 to 655 (EKHIADIEKKMKKAAAELNFEAAAEYRDKLIMLKNT) is the UVR domain.

The protein belongs to the UvrB family. In terms of assembly, forms a heterotetramer with UvrA during the search for lesions. Interacts with UvrC in an incision complex.

Its subcellular location is the cytoplasm. Its function is as follows. The UvrABC repair system catalyzes the recognition and processing of DNA lesions. A damage recognition complex composed of 2 UvrA and 2 UvrB subunits scans DNA for abnormalities. Upon binding of the UvrA(2)B(2) complex to a putative damaged site, the DNA wraps around one UvrB monomer. DNA wrap is dependent on ATP binding by UvrB and probably causes local melting of the DNA helix, facilitating insertion of UvrB beta-hairpin between the DNA strands. Then UvrB probes one DNA strand for the presence of a lesion. If a lesion is found the UvrA subunits dissociate and the UvrB-DNA preincision complex is formed. This complex is subsequently bound by UvrC and the second UvrB is released. If no lesion is found, the DNA wraps around the other UvrB subunit that will check the other stand for damage. In Agathobacter rectalis (strain ATCC 33656 / DSM 3377 / JCM 17463 / KCTC 5835 / VPI 0990) (Eubacterium rectale), this protein is UvrABC system protein B.